A 577-amino-acid chain; its full sequence is Arginine--tRNA ligase (577 aa).

The short motif at P122 to H132 is the 'HIGH' region element.

The protein belongs to the class-I aminoacyl-tRNA synthetase family. In terms of assembly, monomer.

The protein resides in the cytoplasm. It catalyses the reaction tRNA(Arg) + L-arginine + ATP = L-arginyl-tRNA(Arg) + AMP + diphosphate. The sequence is that of Arginine--tRNA ligase from Enterobacter sp. (strain 638).